Here is a 117-residue protein sequence, read N- to C-terminus: Ribosome-binding factor A (117 aa).

This sequence belongs to the RbfA family. As to quaternary structure, monomer. Binds 30S ribosomal subunits, but not 50S ribosomal subunits or 70S ribosomes.

The protein localises to the cytoplasm. One of several proteins that assist in the late maturation steps of the functional core of the 30S ribosomal subunit. Associates with free 30S ribosomal subunits (but not with 30S subunits that are part of 70S ribosomes or polysomes). Required for efficient processing of 16S rRNA. May interact with the 5'-terminal helix region of 16S rRNA. The chain is Ribosome-binding factor A from Lacticaseibacillus casei (strain BL23) (Lactobacillus casei).